The chain runs to 179 residues: Replication restart protein DnaT (179 aa).

Residues 151–168 (SRSSNGGMPQRDINSVSE) show a composition bias toward polar residues. Residues 151-179 (SRSSNGGMPQRDINSVSEPDNHIPPGFRG) form a disordered region.

This sequence belongs to the DnaT family. In terms of assembly, homooligomerizes. Interacts with PriB. Component of the replication restart primosome. Primosome assembly occurs via a 'hand-off' mechanism. PriA binds to replication forks, subsequently PriB then DnaT bind; DnaT then displaces ssDNA to generate the helicase loading substrate.

Functionally, involved in the restart of stalled replication forks, which reloads the replicative helicase on sites other than the origin of replication. Can function in multiple replication restart pathways. Displaces ssDNA from a PriB-ssDNA complex. Probably forms a spiral filament on ssDNA. The chain is Replication restart protein DnaT from Salmonella schwarzengrund (strain CVM19633).